Here is a 200-residue protein sequence, read N- to C-terminus: Protein GrpE (200 aa).

The segment covering 1–12 has biased composition (basic and acidic residues); that stretch reads MSNEEIKNKDEQ. The segment at 1 to 30 is disordered; that stretch reads MSNEEIKNKDEQLQQDAVETEAEVVGTDAD.

This sequence belongs to the GrpE family. In terms of assembly, homodimer.

The protein localises to the cytoplasm. Functionally, participates actively in the response to hyperosmotic and heat shock by preventing the aggregation of stress-denatured proteins, in association with DnaK and GrpE. It is the nucleotide exchange factor for DnaK and may function as a thermosensor. Unfolded proteins bind initially to DnaJ; upon interaction with the DnaJ-bound protein, DnaK hydrolyzes its bound ATP, resulting in the formation of a stable complex. GrpE releases ADP from DnaK; ATP binding to DnaK triggers the release of the substrate protein, thus completing the reaction cycle. Several rounds of ATP-dependent interactions between DnaJ, DnaK and GrpE are required for fully efficient folding. The polypeptide is Protein GrpE (Vibrio cholerae serotype O1 (strain ATCC 39315 / El Tor Inaba N16961)).